Consider the following 107-residue polypeptide: Large ribosomal subunit protein bL21 (107 aa).

This sequence belongs to the bacterial ribosomal protein bL21 family. Part of the 50S ribosomal subunit. Contacts protein L20.

In terms of biological role, this protein binds to 23S rRNA in the presence of protein L20. This Buchnera aphidicola subsp. Schizaphis graminum (strain Sg) protein is Large ribosomal subunit protein bL21.